Here is a 77-residue protein sequence, read N- to C-terminus: MAFERQGKIEKKISYSLFLNGPNVHFGSILFGAVDKSKYAEELCTHPMRQAYNTLDSNSRIIITVQSVAILDGKLVW.

In terms of domain architecture, Peptidase A1 spans 1-77; sequence MAFERQGKIE…VAILDGKLVW (77 aa).

This is an uncharacterized protein from Saccharomyces cerevisiae (strain ATCC 204508 / S288c) (Baker's yeast).